The primary structure comprises 720 residues: Putative fatty acid oxidation complex trifunctional enzyme (720 aa).

A 3-hydroxyacyl-CoA dehydrogenase region spans residues 1-384 (MQNEIKKVCV…SWKYGPFELL (384 aa)). The interval 453-720 (FVITTKMNCL…TIEKLKAIVK (268 aa)) is enoyl-CoA hydratase/isomerase.

In the N-terminal section; belongs to the 3-hydroxyacyl-CoA dehydrogenase family. The protein in the C-terminal section; belongs to the enoyl-CoA hydratase/isomerase family.

The enzyme catalyses a (3S)-3-hydroxyacyl-CoA + NAD(+) = a 3-oxoacyl-CoA + NADH + H(+). It carries out the reaction a (3S)-3-hydroxyacyl-CoA = a (2E)-enoyl-CoA + H2O. It catalyses the reaction a 4-saturated-(3S)-3-hydroxyacyl-CoA = a (3E)-enoyl-CoA + H2O. The catalysed reaction is a (3Z)-enoyl-CoA = a 4-saturated (2E)-enoyl-CoA. The enzyme catalyses a (3E)-enoyl-CoA = a 4-saturated (2E)-enoyl-CoA. The protein is Putative fatty acid oxidation complex trifunctional enzyme of Rickettsia felis (strain ATCC VR-1525 / URRWXCal2) (Rickettsia azadi).